A 172-amino-acid chain; its full sequence is Diphosphoinositol polyphosphate phosphohydrolase 1 (172 aa).

Position 1 is an N-acetylmethionine (methionine 1). Substrate-binding positions include arginine 10, 18–20 (KKR), and 39–41 (SSR). Positions 17–144 (YKKRAACLCF…VQASYFETLR (128 aa)) constitute a Nudix hydrolase domain. 2 residues coordinate Mg(2+): glycine 50 and glutamate 66. The Nudix box motif lies at 51-72 (GGMEPEEEPGTAAVREVCEEAG). The active-site Proton acceptor is glutamate 69. Glutamate 70 contacts Mg(2+). Residues 89-91 (RKH), arginine 115, and lysine 133 each bind substrate.

It belongs to the Nudix hydrolase family. DIPP subfamily. Monomer. The cofactor is Mg(2+). Requires Mn(2+) as cofactor. Zn(2+) serves as cofactor.

Its subcellular location is the cytoplasm. The protein localises to the nucleus. It catalyses the reaction diphospho-myo-inositol polyphosphate + H2O = myo-inositol polyphosphate + phosphate.. It carries out the reaction 5-diphospho-1D-myo-inositol 1,2,3,4,6-pentakisphosphate + H2O = 1D-myo-inositol hexakisphosphate + phosphate + H(+). The enzyme catalyses 3,5-bis(diphospho)-1D-myo-inositol 1,2,4,6-tetrakisphosphate + H2O = 3-diphospho-1D-myo-inositol 1,2,4,5,6-pentakisphosphate + phosphate + 2 H(+). The catalysed reaction is [phosphate](n+1) + n H2O = (n+1) phosphate + n H(+). It catalyses the reaction P(1),P(5)-bis(5'-adenosyl) pentaphosphate + H2O = ADP + ATP + 2 H(+). It carries out the reaction P(1),P(6)-bis(5'-adenosyl) hexaphosphate + H2O = 2 ATP + 2 H(+). The enzyme catalyses P(1),P(4)-bis(5'-adenosyl) tetraphosphate + H2O = AMP + ATP + 2 H(+). The catalysed reaction is a 5'-end (N(7)-methyl 5'-triphosphoguanosine)-ribonucleoside in mRNA + H2O = N(7)-methyl-GMP + a 5'-end diphospho-ribonucleoside in mRNA + 2 H(+). It catalyses the reaction a 5'-end (N(7)-methyl 5'-triphosphoguanosine)-ribonucleoside in mRNA + H2O = N(7)-methyl-GDP + a 5'-end phospho-ribonucleoside in mRNA + 2 H(+). In terms of biological role, cleaves a beta-phosphate from the diphosphate groups in PP-InsP5 (diphosphoinositol pentakisphosphate) and [PP]2-InsP4 (bisdiphosphoinositol tetrakisphosphate), suggesting that it may play a role in signal transduction. InsP6 (inositol hexakisphosphate) is not a substrate. Also able to catalyze the hydrolysis of dinucleoside oligophosphates, with diadenosine 5',5'''-P1,P6-hexaphosphate (Ap6A) and diadenosine 5',5'''- P1,P5-pentaphosphate (Ap5A) being the preferred substrates. The major reaction products are ADP and p4a from Ap6A and ADP and ATP from Ap5A. Also able to hydrolyze 5- phosphoribose 1-diphosphate. Acts as a decapping enzyme that can hydrolyze both monomethylated and unmethylated capped RNAs. Hydrolyzes monomethylated capped RNA after both the alpha- and beta-phosphates generating m7GMP + ppRNA and m7GDP + pRNA. Modulates the stability of a subset of mRNAs implicated in cell motility. Divalent cations zinc, magnesium and manganese determine its substrate specificity. Exhibits diphosphoinositol polyphosphate phosphohydrolase in the presence of magnesium ions, diadenosine hexaphosphate hydrolase activity in the presence of manganese ions and endopolyphosphatase activity in the presence of zinc ions. Plays an important role in limiting DNA damage and maintaining cell survival upon oxidative stress via its endopolyphosphatase activity. This is Diphosphoinositol polyphosphate phosphohydrolase 1 from Bos taurus (Bovine).